A 283-amino-acid polypeptide reads, in one-letter code: Phosphatidylglycerol--prolipoprotein diacylglyceryl transferase (283 aa).

Helical transmembrane passes span 19 to 39, 59 to 79, 90 to 110, and 120 to 140; these read IGPITIRWYGLLIATAVLIGV, LSIWLVIGAIPAARIYYVLFQ, IIAIWQGGIAIHGAIIGGTLA, and VPFWQLADLVAPSLILGQAIG. Arg141 contacts a 1,2-diacyl-sn-glycero-3-phospho-(1'-sn-glycerol). A run of 3 helical transmembrane segments spans residues 181 to 201, 212 to 232, and 245 to 265; these read TFLYESIWDLMVFALLITLFF, VGTLFMVYLATYSLGRLWIEG, and IAQVVSLTGIALGLAGLAWLY.

It belongs to the Lgt family.

It localises to the cell inner membrane. The catalysed reaction is L-cysteinyl-[prolipoprotein] + a 1,2-diacyl-sn-glycero-3-phospho-(1'-sn-glycerol) = an S-1,2-diacyl-sn-glyceryl-L-cysteinyl-[prolipoprotein] + sn-glycerol 1-phosphate + H(+). It participates in protein modification; lipoprotein biosynthesis (diacylglyceryl transfer). In terms of biological role, catalyzes the transfer of the diacylglyceryl group from phosphatidylglycerol to the sulfhydryl group of the N-terminal cysteine of a prolipoprotein, the first step in the formation of mature lipoproteins. This is Phosphatidylglycerol--prolipoprotein diacylglyceryl transferase from Nostoc sp. (strain PCC 7120 / SAG 25.82 / UTEX 2576).